The primary structure comprises 198 residues: Virion infectivity factor (198 aa).

Residues 1–31 (MERTLQSVVGRRRGSSNRGRGKNSLISTPSY) are disordered. The span at 10-21 (GRRRGSSNRGRG) shows a compositional bias: basic residues.

It is found in the host cytoplasm. It localises to the virion. In terms of biological role, determines virus infectivity. This chain is Virion infectivity factor (vif), found in Bovine immunodeficiency virus (strain R29) (BIV).